The sequence spans 367 residues: AdoMet-dependent heme synthase (367 aa).

The region spanning 15-238 (DGSPTCKLIA…TSMHLKATCA (224 aa)) is the Radical SAM core domain. Positions 31, 35, and 38 each coordinate [4Fe-4S] cluster.

This sequence belongs to the radical SAM superfamily. It depends on [4Fe-4S] cluster as a cofactor.

It carries out the reaction Fe-coproporphyrin III + 2 S-adenosyl-L-methionine = heme b + 2 5'-deoxyadenosine + 2 L-methionine + 2 CO2. It functions in the pathway porphyrin-containing compound metabolism; protoheme biosynthesis. Functionally, involved in siroheme-dependent heme b biosynthesis. Catalyzes the conversion of Fe-coproporphyrin III into heme by the oxidative decarboxylation of two propionate side chains. The protein is AdoMet-dependent heme synthase of Nitratidesulfovibrio vulgaris (strain ATCC 29579 / DSM 644 / CCUG 34227 / NCIMB 8303 / VKM B-1760 / Hildenborough) (Desulfovibrio vulgaris).